The following is a 298-amino-acid chain: Probable alpha-L-glutamate ligase (298 aa).

The ATP-grasp domain occupies 108 to 290 (LQLLLKTGVP…IAAEIIDYIE (183 aa)). ATP is bound by residues Lys144, 181–182 (DF), Asp190, and 214–216 (RAN). Residues Asp251, Glu263, and Asn265 each coordinate Mg(2+). Positions 251, 263, and 265 each coordinate Mn(2+).

This sequence belongs to the RimK family. Requires Mg(2+) as cofactor. It depends on Mn(2+) as a cofactor.

This chain is Probable alpha-L-glutamate ligase, found in Haemophilus influenzae (strain PittEE).